A 296-amino-acid chain; its full sequence is MRATLRILCALTFLVSCSRGARVVSGQTVCQGNPEHPCYKIAYFKDVSSRVAFWEALQACEMDGGSLLSIENTAEQKHIEHLLRELSVSSSTGPASITDGDFWIGLTREEGDNAQEPGAFASCPNLYRWTDGSVSLFRNWYADEPSCGGEACVVMYHQPTALAGPGGPYLYQWNDDRCNMKHNFICKYEPESHLVKVQSDRPGGHDVDLSTEDKEDRRTPPTDEDESPRLIIAGPSSMLLIYVIIPTIPLLLLILVASGTCCFQMLSKSKPRTKTSVNQSTLWISKTPKIDSGMEV.

The signal sequence occupies residues 1 to 20; sequence MRATLRILCALTFLVSCSRG. Residues 21–238 lie on the Extracellular side of the membrane; it reads ARVVSGQTVC…RLIIAGPSSM (218 aa). The region spanning 38-187 is the C-type lectin domain; it reads CYKIAYFKDV…CNMKHNFICK (150 aa). Basic and acidic residues predominate over residues 197–221; sequence VQSDRPGGHDVDLSTEDKEDRRTPP. The tract at residues 197 to 229 is disordered; that stretch reads VQSDRPGGHDVDLSTEDKEDRRTPPTDEDESPR. Residues 239–266 form a helical membrane-spanning segment; sequence LLIYVIIPTIPLLLLILVASGTCCFQML. The Cytoplasmic segment spans residues 267 to 296; sequence SKSKPRTKTSVNQSTLWISKTPKIDSGMEV.

Expressed in developing motor neurons.

The protein localises to the membrane. Functionally, plays a role in the development of the nervous system such as in neurite outgrowth and elongation. Involved in motor axon growth and guidance. Required for correct interactions of motor axons with the horizontal myoseptum. The sequence is that of Chondrolectin (chodl) from Danio rerio (Zebrafish).